The following is a 154-amino-acid chain: uncharacterized protein (154 aa).

The tract at residues M1–N37 is disordered. A compositionally biased stretch (low complexity) spans N12–N37. N82 carries N-linked (GlcNAc...) asparagine glycosylation. Residues I116–A136 form a helical membrane-spanning segment. A glycan (N-linked (GlcNAc...) asparagine) is linked at N149.

The protein localises to the membrane. This is an uncharacterized protein from Dictyostelium discoideum (Social amoeba).